We begin with the raw amino-acid sequence, 206 residues long: Probable glutathione S-transferase 7 (206 aa).

Residues 2 to 79 (VHYKVSYFPI…YLARQFGING (78 aa)) enclose the GST N-terminal domain. Residues Tyr8, Trp39, Lys43, 49-51 (GQL), and 63-64 (QS) contribute to the glutathione site. The GST C-terminal domain maps to 81–206 (CAWEEAQVNS…WLETRPVTPF (126 aa)).

Belongs to the GST superfamily. Sigma family.

The enzyme catalyses RX + glutathione = an S-substituted glutathione + a halide anion + H(+). In terms of biological role, conjugation of reduced glutathione to a wide number of exogenous and endogenous hydrophobic electrophiles. May play a role in the detoxification of reactive oxygen species produced during pathogenic bacterial infection. The polypeptide is Probable glutathione S-transferase 7 (gst-7) (Caenorhabditis elegans).